A 612-amino-acid polypeptide reads, in one-letter code: Elongation factor 4 (612 aa).

The region spanning 11 to 193 (KHIRNFSIIA…RIVTDVPAPS (183 aa)) is the tr-type G domain. Residues 23–28 (DHGKST) and 140–143 (NKVD) each bind GTP.

It belongs to the TRAFAC class translation factor GTPase superfamily. Classic translation factor GTPase family. LepA subfamily.

The protein localises to the cell membrane. It carries out the reaction GTP + H2O = GDP + phosphate + H(+). Its function is as follows. Required for accurate and efficient protein synthesis under certain stress conditions. May act as a fidelity factor of the translation reaction, by catalyzing a one-codon backward translocation of tRNAs on improperly translocated ribosomes. Back-translocation proceeds from a post-translocation (POST) complex to a pre-translocation (PRE) complex, thus giving elongation factor G a second chance to translocate the tRNAs correctly. Binds to ribosomes in a GTP-dependent manner. This chain is Elongation factor 4, found in Lacticaseibacillus paracasei (strain ATCC 334 / BCRC 17002 / CCUG 31169 / CIP 107868 / KCTC 3260 / NRRL B-441) (Lactobacillus paracasei).